A 149-amino-acid chain; its full sequence is Transcriptional repressor NrdR (149 aa).

The segment at 3–34 is a zinc-finger region; sequence CPFCSTEETKVIDSRLVSDGYQVRRRRECTKC. An ATP-cone domain is found at 49–139; sequence PKIIKNNGMR…VYLSFENINE (91 aa).

This sequence belongs to the NrdR family. Requires Zn(2+) as cofactor.

In terms of biological role, negatively regulates transcription of bacterial ribonucleotide reductase nrd genes and operons by binding to NrdR-boxes. In Mannheimia succiniciproducens (strain KCTC 0769BP / MBEL55E), this protein is Transcriptional repressor NrdR.